The following is a 274-amino-acid chain: tRNA-cytidine(32) 2-sulfurtransferase (274 aa).

Residues 40 to 45 (SGGKDS) carry the PP-loop motif motif. [4Fe-4S] cluster is bound by residues Cys-115, Cys-118, and Cys-206.

This sequence belongs to the TtcA family. As to quaternary structure, homodimer. Mg(2+) serves as cofactor. The cofactor is [4Fe-4S] cluster.

The protein resides in the cytoplasm. It catalyses the reaction cytidine(32) in tRNA + S-sulfanyl-L-cysteinyl-[cysteine desulfurase] + AH2 + ATP = 2-thiocytidine(32) in tRNA + L-cysteinyl-[cysteine desulfurase] + A + AMP + diphosphate + H(+). It participates in tRNA modification. Functionally, catalyzes the ATP-dependent 2-thiolation of cytidine in position 32 of tRNA, to form 2-thiocytidine (s(2)C32). The sulfur atoms are provided by the cysteine/cysteine desulfurase (IscS) system. In Pseudomonas aeruginosa (strain LESB58), this protein is tRNA-cytidine(32) 2-sulfurtransferase.